A 172-amino-acid polypeptide reads, in one-letter code: MLSGKAAYDLFVYGSLQEPEVVYVLLNRVPDHVSAVLSGFHRFRLKGRVYPTILPDGTGKVNGKVLKGITDDELKMLDEFEDVEYDRKTVEVMLTDTSEKLQVETYVWKNKDDPDLYGEWDFEEWRQHDKEDFVTATKKFLENRRLPEAKTRMDTFKTFFKQDLENGKPLDS.

Residue 13–18 participates in substrate binding; it reads YGSLQE. Glutamate 81 (proton acceptor) is an active-site residue.

Belongs to the gamma-glutamylcyclotransferase family. In terms of tissue distribution, expressed in flowers, leaves, stems and roots.

Putative gamma-glutamylcyclotransferase. This chain is AIG2-like protein C, found in Arabidopsis thaliana (Mouse-ear cress).